A 360-amino-acid chain; its full sequence is MIIWLAELLQPYFSFFRLFEYLSFRAILSVLTALGLSLWMGPRLIKRLQLLQIGQVVRNEGPESHFSKRGTPTMGGVMILAAISITILLWANLSNPYVWAVLAVLMGYGAVGFVDDYRKVVRKNTDGLIARWKYFWQSAIALVVAFALYAYGKDTAATQLVVPFFKDVMPQLGLMYIVLTYFVIVGTSNAVNLTDGLDGLAIMPTVLVAAGFAVIAWATGNVNFSQYLHIPYLPHASELVVVCTAIVGAGLGFLWFNTYPAQVFMGDVGSLALGGALGTIAVLVRQELVLVIMGGVFVMETLSVILQVGSYKLRGQRIFRMAPIHHHYELKGWPEPRVIVRFWIISMVLVLIGLATLKVR.

The next 10 helical transmembrane spans lie at 21–41, 73–93, 94–114, 132–152, 168–188, 199–219, 236–256, 263–283, 288–308, and 338–358; these read YLSFRAILSVLTALGLSLWMG, TMGGVMILAAISITILLWANL, SNPYVWAVLAVLMGYGAVGFV, WKYFWQSAIALVVAFALYAYG, VMPQLGLMYIVLTYFVIVGTS, GLAIMPTVLVAAGFAVIAWAT, ASELVVVCTAIVGAGLGFLWF, VFMGDVGSLALGGALGTIAVL, LVLVIMGGVFVMETLSVILQV, and VIVRFWIISMVLVLIGLATLK.

This sequence belongs to the glycosyltransferase 4 family. MraY subfamily. Mg(2+) serves as cofactor.

It is found in the cell inner membrane. The catalysed reaction is UDP-N-acetyl-alpha-D-muramoyl-L-alanyl-gamma-D-glutamyl-meso-2,6-diaminopimeloyl-D-alanyl-D-alanine + di-trans,octa-cis-undecaprenyl phosphate = di-trans,octa-cis-undecaprenyl diphospho-N-acetyl-alpha-D-muramoyl-L-alanyl-D-glutamyl-meso-2,6-diaminopimeloyl-D-alanyl-D-alanine + UMP. It participates in cell wall biogenesis; peptidoglycan biosynthesis. Its function is as follows. Catalyzes the initial step of the lipid cycle reactions in the biosynthesis of the cell wall peptidoglycan: transfers peptidoglycan precursor phospho-MurNAc-pentapeptide from UDP-MurNAc-pentapeptide onto the lipid carrier undecaprenyl phosphate, yielding undecaprenyl-pyrophosphoryl-MurNAc-pentapeptide, known as lipid I. The protein is Phospho-N-acetylmuramoyl-pentapeptide-transferase of Vibrio vulnificus (strain YJ016).